The following is a 20-amino-acid chain: Haemoporin (20 aa).

Residues 1–20 (AAVPEAAAEATAEAAPVSEF) are disordered.

Homopentamer. Forms a cylindrical structure with a central pore. In terms of tissue distribution, detected in the hemolymph.

Its subcellular location is the secreted. In Aplysia californica (California sea hare), this protein is Haemoporin.